Reading from the N-terminus, the 432-residue chain is ATP-dependent RNA helicase RhlB (432 aa).

A Q motif motif is present at residues 9-37; it reads QRFADLPLHAEVIQALNENGFEFCTPIQA. Residues 40–219 enclose the Helicase ATP-binding domain; sequence LPVLLKAKDI…YDHMNDPEKV (180 aa). An ATP-binding site is contributed by 53–60; the sequence is AQTGTGKT. A DEAD box motif is present at residues 165 to 168; sequence DEAD. Residues 243 to 390 enclose the Helicase C-terminal domain; that stretch reads KMRLLLTLME…VSRYDREALL (148 aa). A disordered region spans residues 395 to 432; it reads TPVKIHRKHPTSRTRDGAKGAHRSGGARPPRHRTRRPS. Over residues 423-432 the composition is skewed to basic residues; that stretch reads PPRHRTRRPS.

This sequence belongs to the DEAD box helicase family. RhlB subfamily. Component of the RNA degradosome, which is a multiprotein complex involved in RNA processing and mRNA degradation.

It localises to the cytoplasm. It catalyses the reaction ATP + H2O = ADP + phosphate + H(+). In terms of biological role, DEAD-box RNA helicase involved in RNA degradation. Has RNA-dependent ATPase activity and unwinds double-stranded RNA. The sequence is that of ATP-dependent RNA helicase RhlB from Shewanella denitrificans (strain OS217 / ATCC BAA-1090 / DSM 15013).